A 262-amino-acid chain; its full sequence is Indole-3-glycerol phosphate synthase (262 aa).

The protein belongs to the TrpC family.

It catalyses the reaction 1-(2-carboxyphenylamino)-1-deoxy-D-ribulose 5-phosphate + H(+) = (1S,2R)-1-C-(indol-3-yl)glycerol 3-phosphate + CO2 + H2O. The protein operates within amino-acid biosynthesis; L-tryptophan biosynthesis; L-tryptophan from chorismate: step 4/5. This is Indole-3-glycerol phosphate synthase from Bordetella avium (strain 197N).